A 1295-amino-acid polypeptide reads, in one-letter code: Phosphoribosylformylglycinamidine synthase (1295 aa).

The disordered stretch occupies residues 305-327; that stretch reads WPGAATGSGGEIRDEGATGRGAK. Residues 307–318 and alanine 678 each bind ATP; that span reads GAATGSGGEIRD. Mg(2+) is bound by residues glutamate 718, asparagine 722, and aspartate 884. ATP is bound at residue serine 886. The 254-residue stretch at 1042-1295 folds into the Glutamine amidotransferase type-1 domain; it reads VAVLREQGVN…IFRNARKQLG (254 aa). Cysteine 1135 functions as the Nucleophile in the catalytic mechanism. Catalysis depends on residues histidine 1260 and glutamate 1262.

It in the N-terminal section; belongs to the FGAMS family. Monomer.

It is found in the cytoplasm. It catalyses the reaction N(2)-formyl-N(1)-(5-phospho-beta-D-ribosyl)glycinamide + L-glutamine + ATP + H2O = 2-formamido-N(1)-(5-O-phospho-beta-D-ribosyl)acetamidine + L-glutamate + ADP + phosphate + H(+). Its pathway is purine metabolism; IMP biosynthesis via de novo pathway; 5-amino-1-(5-phospho-D-ribosyl)imidazole from N(2)-formyl-N(1)-(5-phospho-D-ribosyl)glycinamide: step 1/2. In terms of biological role, phosphoribosylformylglycinamidine synthase involved in the purines biosynthetic pathway. Catalyzes the ATP-dependent conversion of formylglycinamide ribonucleotide (FGAR) and glutamine to yield formylglycinamidine ribonucleotide (FGAM) and glutamate. In Shigella sonnei (strain Ss046), this protein is Phosphoribosylformylglycinamidine synthase.